Here is a 462-residue protein sequence, read N- to C-terminus: Probable acid phosphatase SPBC4.06 (462 aa).

Catalysis depends on histidine 35, which acts as the Nucleophile. The active-site Proton donor is aspartate 330.

This sequence belongs to the histidine acid phosphatase family.

It is found in the mitochondrion. The enzyme catalyses a phosphate monoester + H2O = an alcohol + phosphate. This is Probable acid phosphatase SPBC4.06 from Schizosaccharomyces pombe (strain 972 / ATCC 24843) (Fission yeast).